A 430-amino-acid polypeptide reads, in one-letter code: Enolase (430 aa).

Gln165 is a binding site for (2R)-2-phosphoglycerate. Glu207 serves as the catalytic Proton donor. 3 residues coordinate Mg(2+): Asp244, Glu287, and Asp314. Residues Lys339, Arg368, Ser369, and Lys390 each contribute to the (2R)-2-phosphoglycerate site. Lys339 serves as the catalytic Proton acceptor.

Belongs to the enolase family. Component of the RNA degradosome, a multiprotein complex involved in RNA processing and mRNA degradation. Mg(2+) is required as a cofactor.

It is found in the cytoplasm. The protein localises to the secreted. It localises to the cell surface. The catalysed reaction is (2R)-2-phosphoglycerate = phosphoenolpyruvate + H2O. Its pathway is carbohydrate degradation; glycolysis; pyruvate from D-glyceraldehyde 3-phosphate: step 4/5. Catalyzes the reversible conversion of 2-phosphoglycerate (2-PG) into phosphoenolpyruvate (PEP). It is essential for the degradation of carbohydrates via glycolysis. The polypeptide is Enolase (Xanthomonas campestris pv. campestris (strain 8004)).